A 348-amino-acid chain; its full sequence is Actin maturation protease (348 aa).

Over residues 1 to 18 (MISPCSPPLEPPVPPPET) the composition is skewed to pro residues. A disordered region spans residues 1-64 (MISPCSPPLE…LPPPPRTTGF (64 aa)). Low complexity predominate over residues 34–48 (NLPELAFPPSSFQAS). The segment covering 49–60 (VPPPPPLPPPPR) has biased composition (pro residues). The tract at residues 121 to 241 (SLIQEGPQCG…WAVSAGVLLG (121 aa)) is peptidase C39-like. Residue C129 is part of the active site. Residue S313 is modified to Phosphoserine.

Belongs to the ACTMAP family. In terms of assembly, interacts (via N-terminus) with PFN2; the interaction may facilitate efficient cleavage of the acetylated N-terminus of immature actin. Interacts with PFN1.

It is found in the cytoplasm. It catalyses the reaction N-terminal N(alpha)-acetyl-L-methionyl-L-aspartyl-[protein] + H2O = N-terminal L-aspartyl-[protein] + N-acetyl-L-methionine. It carries out the reaction N-terminal N(alpha)-acetyl-L-methionyl-L-glutamyl-[protein] + H2O = N-terminal L-glutamyl-[protein] + N-acetyl-L-methionine. The enzyme catalyses N-terminal N(alpha)-acetyl-L-cysteinyl-L-aspartyl-[protein] + H2O = N-terminal L-aspartyl-[protein] + N-acetyl-L-cysteine. The catalysed reaction is N-terminal N(alpha)-acetyl-L-cysteinyl-L-glutamyl-[protein] + H2O = N-terminal L-glutamyl-[protein] + N-acetyl-L-cysteine. Actin maturation protease that specifically mediates the cleavage of immature acetylated N-terminal actin, thereby contributing to actin maturation. Cleaves N-terminal acetylated methionine of immature cytoplasmic beta- and gamma-actins ACTB and ACTG1 after translation. Cleaves N-terminal acetylated cysteine of muscle alpha-actins ACTA1, ACTC1 and ACTA2 after canonical removal of N-terminal methionine. In Bos taurus (Bovine), this protein is Actin maturation protease.